Here is a 153-residue protein sequence, read N- to C-terminus: MNTSPKMEMEMKMETKAAPEAGMIKKSNEEWRTVLSPEQFKILREKSIEKRGSGEYVKLFEEGIYCCVGCGNPVYKSTTKFDSGCGWPAFFDAIPGAINRTEERAGLRYEITCTKCDGHLGHVLKNEGFPTPTDERHCVNSVALKFSSAITSQ.

The MsrB domain occupies 28–149 (NEEWRTVLSP…NSVALKFSSA (122 aa)). Positions 67, 70, 113, and 116 each coordinate Zn(2+). An intrachain disulfide couples C85 to C138. C138 serves as the catalytic Nucleophile.

The protein belongs to the MsrB Met sulfoxide reductase family. Requires Zn(2+) as cofactor.

The protein resides in the cytoplasm. It is found in the cytosol. It catalyses the reaction L-methionyl-[protein] + [thioredoxin]-disulfide + H2O = L-methionyl-(R)-S-oxide-[protein] + [thioredoxin]-dithiol. Functionally, catalyzes the reduction of methionine sulfoxide (MetSO) to methionine in proteins. Plays a protective role against oxidative stress by restoring activity to proteins that have been inactivated by methionine oxidation. MSRB family specifically reduces the MetSO R-enantiomer. The sequence is that of Peptide methionine sulfoxide reductase B6 (MSRB6) from Arabidopsis thaliana (Mouse-ear cress).